Here is a 243-residue protein sequence, read N- to C-terminus: Tyrosine recombinase XerD-like (243 aa).

The region spanning 1-72 (MKQAIESFIQ…AVNQFLYFLY (72 aa)) is the Core-binding (CB) domain. The 153-residue stretch at 91 to 243 (SVKKKLERED…KTSMSLEKFR (153 aa)) folds into the Tyr recombinase domain. Catalysis depends on residues Lys149 and Arg210.

The protein belongs to the 'phage' integrase family. XerD-like subfamily.

The protein localises to the cytoplasm. Putative tyrosine recombinase. Not involved in the cutting and rejoining of the recombining DNA molecules on dif(SL) site. This chain is Tyrosine recombinase XerD-like, found in Streptococcus suis (strain 98HAH33).